Here is a 277-residue protein sequence, read N- to C-terminus: Small ribosomal subunit protein uS2 (277 aa).

Residues 226–277 are disordered; that stretch reads GQQARADRGEDLGAAVEPVAEPALVEEAAAPVTEDEQVPAEAAAETERQSDA. Residues 239–257 show a composition bias toward low complexity; that stretch reads AAVEPVAEPALVEEAAAPV.

Belongs to the universal ribosomal protein uS2 family.

The chain is Small ribosomal subunit protein uS2 from Sphingopyxis alaskensis (strain DSM 13593 / LMG 18877 / RB2256) (Sphingomonas alaskensis).